Consider the following 94-residue polypeptide: Integration host factor subunit beta (94 aa).

This sequence belongs to the bacterial histone-like protein family. As to quaternary structure, heterodimer of an alpha and a beta chain.

Its function is as follows. This protein is one of the two subunits of integration host factor, a specific DNA-binding protein that functions in genetic recombination as well as in transcriptional and translational control. This chain is Integration host factor subunit beta, found in Aeromonas hydrophila subsp. hydrophila (strain ATCC 7966 / DSM 30187 / BCRC 13018 / CCUG 14551 / JCM 1027 / KCTC 2358 / NCIMB 9240 / NCTC 8049).